The following is a 458-amino-acid chain: Adenylosuccinate synthetase (458 aa).

GTP is bound by residues 17–23 (GDEGKGK) and 45–47 (GHT). The active-site Proton acceptor is Asp18. Mg(2+)-binding residues include Asp18 and Gly45. IMP-binding positions include 18 to 21 (DEGK), 43 to 46 (NAGH), Thr137, Arg151, Gln247, Thr262, and Arg330. The active-site Proton donor is the His46. Residue 326-332 (VTTGRSR) participates in substrate binding. Residues Arg332, 358–360 (KLD), and 440–442 (STS) contribute to the GTP site.

Belongs to the adenylosuccinate synthetase family. Homodimer. It depends on Mg(2+) as a cofactor.

Its subcellular location is the cytoplasm. It catalyses the reaction IMP + L-aspartate + GTP = N(6)-(1,2-dicarboxyethyl)-AMP + GDP + phosphate + 2 H(+). The protein operates within purine metabolism; AMP biosynthesis via de novo pathway; AMP from IMP: step 1/2. Plays an important role in the de novo pathway of purine nucleotide biosynthesis. Catalyzes the first committed step in the biosynthesis of AMP from IMP. This Acidovorax ebreus (strain TPSY) (Diaphorobacter sp. (strain TPSY)) protein is Adenylosuccinate synthetase.